The primary structure comprises 83 residues: U5-theraphotoxin-Hs1a 1 (83 aa).

The signal sequence occupies residues 1-21; the sequence is MKTSMFLTLTGLGLLFVVCYA. Residues 22–49 constitute a propeptide that is removed on maturation; the sequence is SESEEKEFPKELLSSIFAADSDFKVEER. Intrachain disulfides connect Cys51/Cys63, Cys56/Cys68, and Cys62/Cys75.

This sequence belongs to the neurotoxin 10 (Hwtx-1) family. 51 (Hntx-8) subfamily. Hntx-8 sub-subfamily. In terms of tissue distribution, expressed by the venom gland.

Its subcellular location is the secreted. In terms of biological role, agglutinates human and mice erythrocytes. This activity can be specifically inhibited by mannosamine. This lectin shows very low toxicity in both mammals and insects. The sequence is that of U5-theraphotoxin-Hs1a 1 from Cyriopagopus schmidti (Chinese bird spider).